The following is a 73-amino-acid chain: Signaling peptide TAXIMIN 2 (73 aa).

An N-terminal signal peptide occupies residues 1-27; it reads MGDCRPLGFLIGLPFALVALVLALVGA.

As to expression, confined to the vasculature of various organs, including seedling roots, leaves, cotyledons, sepals and petals. Also accumulates in root hair cells.

It localises to the secreted. In terms of biological role, signaling peptide involved in the regulation of lateral organs separation. The polypeptide is Signaling peptide TAXIMIN 2 (Arabidopsis thaliana (Mouse-ear cress)).